The sequence spans 214 residues: N-(5'-phosphoribosyl)anthranilate isomerase (214 aa).

The protein belongs to the TrpF family.

It carries out the reaction N-(5-phospho-beta-D-ribosyl)anthranilate = 1-(2-carboxyphenylamino)-1-deoxy-D-ribulose 5-phosphate. Its pathway is amino-acid biosynthesis; L-tryptophan biosynthesis; L-tryptophan from chorismate: step 3/5. In Rhodospirillum centenum (strain ATCC 51521 / SW), this protein is N-(5'-phosphoribosyl)anthranilate isomerase.